We begin with the raw amino-acid sequence, 324 residues long: Phosphomevalonate decarboxylase (324 aa).

Belongs to the phosphomevalonate decarboxylase family.

It carries out the reaction (R)-5-phosphomevalonate + ATP = isopentenyl phosphate + ADP + phosphate + CO2. Its activity is regulated as follows. Is strongly inhibited by 6-fluoromevalonate monophosphate but shows negligible inhibition by 6-fluoromevalonate diphosphate (a potent inhibitor of the classical mevalonate pathway). Functionally, catalyzes the decarboxylation of mevalonate 5-phosphate (MVAP) to isopentenyl phosphate (IP). Functions in an alternate mevalonate (MVA) pathway leading to isopentenyl diphosphate (IPP), a key precursor for the biosynthesis of isoprenoid compounds such as archaeal membrane lipids. The polypeptide is Phosphomevalonate decarboxylase (mvaD) (Haloferax volcanii (strain ATCC 29605 / DSM 3757 / JCM 8879 / NBRC 14742 / NCIMB 2012 / VKM B-1768 / DS2) (Halobacterium volcanii)).